A 348-amino-acid chain; its full sequence is Putative zinc metalloprotease HP_0258 (348 aa).

Position 16 (histidine 16) interacts with Zn(2+). Glutamate 17 is a catalytic residue. Histidine 20 serves as a coordination point for Zn(2+). 5 helical membrane-spanning segments follow: residues 43–63, 93–113, 247–267, 275–295, and 324–344; these read CFFKLFGTQFALSLIPLGGYV, WILFGGAFFNFLFAILVYFFL, LIMGSSSVKELSGVVGIVGAL, MLLLFGAFLSINLGILNLLPI, and LWLAGVGFLVFIMFLGLFNDL. A PDZ domain is found at 106–175; it reads AILVYFFLAL…GELVLEIERN (70 aa).

Belongs to the peptidase M50B family. Zn(2+) serves as cofactor.

Its subcellular location is the cell inner membrane. The sequence is that of Putative zinc metalloprotease HP_0258 from Helicobacter pylori (strain ATCC 700392 / 26695) (Campylobacter pylori).